We begin with the raw amino-acid sequence, 179 residues long: CASP-like protein 5A2 (179 aa).

The disordered stretch occupies residues 1–24 (MNVSHASVHPVEDPPAAATEVENP). The Cytoplasmic segment spans residues 1–38 (MNVSHASVHPVEDPPAAATEVENPPRVRMDDMEGMPGT). The chain crosses the membrane as a helical span at residues 39–59 (LLGLALRFFQFLFAAAALCVM). The Extracellular portion of the chain corresponds to 60–70 (ASTSDFPSVTA). A helical transmembrane segment spans residues 71-91 (FCYLVAATGLQSLWSLALAMV). Residues 92-115 (DVYAIMVKRSLQNRRLVSLFAIGD) are Cytoplasmic-facing. A helical membrane pass occupies residues 116–136 (GVTSTLTFAAACASAGITVLI). Over 137–155 (DNDLNSCAQNHCVQFETST) the chain is Extracellular. Residues 156–176 (ALAFISWFAALPSFLFNFWSL) traverse the membrane as a helical segment. Topologically, residues 177–179 (ASR) are cytoplasmic.

Belongs to the Casparian strip membrane proteins (CASP) family. As to quaternary structure, homodimer and heterodimers.

The protein localises to the cell membrane. The sequence is that of CASP-like protein 5A2 from Arabidopsis thaliana (Mouse-ear cress).